Consider the following 286-residue polypeptide: AB hydrolase superfamily protein YfhM (286 aa).

The AB hydrolase-1 domain maps to 27-272 (PLIVLLHGFP…ASHWINHEKP (246 aa)). The Nucleophile role is filled by Asp103. The active-site Proton donor is Tyr210. Residue His265 is the Proton acceptor of the active site.

Belongs to the AB hydrolase superfamily. Epoxide hydrolase family.

The chain is AB hydrolase superfamily protein YfhM (yfhM) from Bacillus subtilis (strain 168).